We begin with the raw amino-acid sequence, 125 residues long: Late histone H2A.1 (125 aa).

Over residues 1–18 the composition is skewed to basic residues; that stretch reads MSGRGKGKAKGTKSKTRS. The interval 1–21 is disordered; it reads MSGRGKGKAKGTKSKTRSSRA. N-acetylserine is present on serine 2. A Phosphoserine modification is found at serine 2. At glutamine 104 the chain carries N5-methylglutamine. Lysine 119 participates in a covalent cross-link: Glycyl lysine isopeptide (Lys-Gly) (interchain with G-Cter in ubiquitin).

The protein belongs to the histone H2A family. As to quaternary structure, the nucleosome is a histone octamer containing two molecules each of H2A, H2B, H3 and H4 assembled in one H3-H4 heterotetramer and two H2A-H2B heterodimers. The octamer wraps approximately 147 bp of DNA. Post-translationally, monoubiquitination of Lys-119 gives a specific tag for epigenetic transcriptional repression. Phosphorylation of Ser-2 directly represses transcription.

Its subcellular location is the nucleus. It is found in the chromosome. Its function is as follows. Core component of nucleosome. Nucleosomes wrap and compact DNA into chromatin, limiting DNA accessibility to the cellular machineries which require DNA as a template. Histones thereby play a central role in transcription regulation, DNA repair, DNA replication and chromosomal stability. DNA accessibility is regulated via a complex set of post-translational modifications of histones, also called histone code, and nucleosome remodeling. This chain is Late histone H2A.1, found in Psammechinus miliaris (Green sea urchin).